A 181-amino-acid chain; its full sequence is MREEKQLLKQEIIDKIQRYPAFVIMQYAGLTANQANDFRRQLGKIGGDVEVVRKRVLLKAAKDAGLELDVSSLNGHIGLVFLGEDPIEATKTVFKFSQEREKIIQVLGGRFDGQIYSGDDVEKLSKLPSKDEMRAQFLSTLEAPMAQTLAVVEALLASVAYCLDNKSKQGSEEPENSASEA.

This sequence belongs to the universal ribosomal protein uL10 family. As to quaternary structure, part of the ribosomal stalk of the 50S ribosomal subunit. The N-terminus interacts with L11 and the large rRNA to form the base of the stalk. The C-terminus forms an elongated spine to which L12 dimers bind in a sequential fashion forming a multimeric L10(L12)X complex.

Its function is as follows. Forms part of the ribosomal stalk, playing a central role in the interaction of the ribosome with GTP-bound translation factors. This is Large ribosomal subunit protein uL10 from Protochlamydia amoebophila (strain UWE25).